The sequence spans 187 residues: Protein GrpE (187 aa).

Residues 1–23 (MADEQNLDAQAQDQAAEAGAGEE) are disordered. Residues 7-23 (LDAQAQDQAAEAGAGEE) show a composition bias toward low complexity.

The protein belongs to the GrpE family. In terms of assembly, homodimer.

The protein resides in the cytoplasm. Its function is as follows. Participates actively in the response to hyperosmotic and heat shock by preventing the aggregation of stress-denatured proteins, in association with DnaK and GrpE. It is the nucleotide exchange factor for DnaK and may function as a thermosensor. Unfolded proteins bind initially to DnaJ; upon interaction with the DnaJ-bound protein, DnaK hydrolyzes its bound ATP, resulting in the formation of a stable complex. GrpE releases ADP from DnaK; ATP binding to DnaK triggers the release of the substrate protein, thus completing the reaction cycle. Several rounds of ATP-dependent interactions between DnaJ, DnaK and GrpE are required for fully efficient folding. This chain is Protein GrpE, found in Pseudomonas savastanoi pv. phaseolicola (strain 1448A / Race 6) (Pseudomonas syringae pv. phaseolicola (strain 1448A / Race 6)).